Here is a 611-residue protein sequence, read N- to C-terminus: Probable methyltransferase PMT1 (611 aa).

At 1–11 the chain is on the cytoplasmic side; it reads MRGRSEGGKKK. Residues 12–32 traverse the membrane as a helical; Signal-anchor for type II membrane protein segment; that stretch reads PVIVLLCVASVVLVFVYLFFG. Topologically, residues 33–611 are lumenal; the sequence is SSNHKAIEYG…LTSESLRDLE (579 aa). N-linked (GlcNAc...) asparagine glycosylation is present at Asn345.

Belongs to the methyltransferase superfamily.

Its subcellular location is the golgi apparatus membrane. This chain is Probable methyltransferase PMT1, found in Arabidopsis thaliana (Mouse-ear cress).